The sequence spans 379 residues: Putative cyclic ADP-D-ribose synthase TIR2 (379 aa).

The TIR domain occupies 254 to 379 (KVYDVFISHS…TISWTTGLVK (126 aa)). Glu335 is a catalytic residue.

In terms of assembly, homodimer.

Its subcellular location is the cytoplasm. Activated upon phage infection. In terms of biological role, one of 2 TIR-like protein components of the Thoeris antiviral defense system, composed of ThsA, TIR1 (thsB1) and TIR2 (thsB2). Phage infection activates this protein; by 70 minutes post-infection with phage SPO1, TIR2 generates a signal molecule that in turn activates the NAD(+) hydrolase activity of ThsA (tested with B.cereus). The signal is similar to cyclic ADP-D-ribose, but how it differs is unknown. Expression of Thoeris in B.subtilis (strain BEST7003) confers resistance to phages phi29, phi3T, SPBeta, SBSphi11, SBSphi13, SBSphiJ, SPO1 and SPR but not SBSphiC. The TIR paralogs confer resistance to different phages; this subunit confers resistance to phi3T, SPBeta, SBSphi13, SBSphiJ, SPO1 and SPR but not phi29, SBSphi11 or SBSphiC. There is overlap in the phage range for this system, both TIR1 and TIR2 are activated by SBSphi13, SBSphiJ, SPO1 and SPR. Probably hydrolyzes NAD(+) to make a cyclic ADP-D-ribose (cADPR) signaling molecule; might make 3'cADPR. This is Putative cyclic ADP-D-ribose synthase TIR2 from Cytobacillus dafuensis (Bacillus dafuensis).